A 673-amino-acid polypeptide reads, in one-letter code: Centrosomal protein kizuna (673 aa).

Disordered stretches follow at residues Thr-175–Cys-207, Gly-255–Leu-413, Gln-432–Lys-480, Glu-494–Asp-516, and Ser-613–Asp-673. Polar residues-rich tracts occupy residues Gln-196–Cys-207 and Gly-255–Ser-266. 2 stretches are compositionally biased toward basic and acidic residues: residues Glu-267–Cys-293 and Ile-303–Ala-316. 2 positions are modified to phosphoserine: Ser-317 and Ser-321. Residues Ser-331–Ser-357 show a composition bias toward basic and acidic residues. A Phosphothreonine; by PLK1 modification is found at Thr-379. Over residues Thr-471–Lys-480 the composition is skewed to basic and acidic residues. 2 stretches are compositionally biased toward low complexity: residues Ser-503 to Ser-512 and Ser-613 to Leu-625. 3 positions are modified to phosphoserine: Ser-647, Ser-650, and Ser-652.

It belongs to the kizuna family. As to quaternary structure, interacts with AKAP9, CEP72, ODF2, PCNT and TUBGCP2. In terms of processing, phosphorylation at Thr-379 by PLK1 is not needed for centrosomal localization or pericentriolar material expansion but is indispensable for spindle-pole stabilization.

The protein localises to the cytoplasm. Its subcellular location is the cytoskeleton. The protein resides in the microtubule organizing center. It localises to the centrosome. It is found in the cilium basal body. Centrosomal protein required for establishing a robust mitotic centrosome architecture that can endure the forces that converge on the centrosomes during spindle formation. Required for stabilizing the expanded pericentriolar material around the centriole. The polypeptide is Centrosomal protein kizuna (KIZ) (Homo sapiens (Human)).